Here is a 744-residue protein sequence, read N- to C-terminus: Protein pthb1 homolog (744 aa).

The span at 722-733 shows a compositional bias: basic and acidic residues; sequence EHSPKELPKIRE. The segment at 722–744 is disordered; sequence EHSPKELPKIREEEEEEEQQVTA. A compositionally biased stretch (acidic residues) spans 734–744; it reads EEEEEEQQVTA.

As to quaternary structure, part of BBSome complex, that contains bbs-1, bbs-2, bbs-4, bbs-5, osm-12, bbs-8/ttc-8 and bbs-9. Interacts with bbs-1.

Functionally, component of the BBSome complex. The BBSome complex is thought to function as a coat complex required for sorting of specific membrane proteins to the primary cilia. The BBSome complex is required for ciliogenesis but is dispensable for centriolar satellite function. Required for proper BBSome complex assembly and its ciliary localization. Required for cilia biogenesis and both the assembly and movement of intraflagellar transport proteins along the ciliary axoneme. In ciliated sensory neurons, required for the sensation of nitric oxide and avoidance of NO-producing organisms like P.aeruginosa. The polypeptide is Protein pthb1 homolog (Caenorhabditis elegans).